Reading from the N-terminus, the 352-residue chain is 4-hydroxy-3-methylbut-2-en-1-yl diphosphate synthase (flavodoxin) (352 aa).

Residues Cys-262, Cys-265, Cys-297, and Glu-304 each coordinate [4Fe-4S] cluster.

Belongs to the IspG family. Requires [4Fe-4S] cluster as cofactor.

The enzyme catalyses (2E)-4-hydroxy-3-methylbut-2-enyl diphosphate + oxidized [flavodoxin] + H2O + 2 H(+) = 2-C-methyl-D-erythritol 2,4-cyclic diphosphate + reduced [flavodoxin]. Its pathway is isoprenoid biosynthesis; isopentenyl diphosphate biosynthesis via DXP pathway; isopentenyl diphosphate from 1-deoxy-D-xylulose 5-phosphate: step 5/6. In terms of biological role, converts 2C-methyl-D-erythritol 2,4-cyclodiphosphate (ME-2,4cPP) into 1-hydroxy-2-methyl-2-(E)-butenyl 4-diphosphate. The sequence is that of 4-hydroxy-3-methylbut-2-en-1-yl diphosphate synthase (flavodoxin) from Campylobacter curvus (strain 525.92).